Consider the following 372-residue polypeptide: Cytochrome b (372 aa).

4 consecutive transmembrane segments (helical) span residues 29-49 (FGSM…ILSW), 73-95 (WFIR…LHIL), 108-128 (VWYS…LGYV), and 174-194 (FFSF…IHLI). Heme b contacts are provided by H79 and H93. Residues H178 and H192 each coordinate heme b. H197 lines the a ubiquinone pocket. 4 helical membrane passes run 220–240 (FSLK…FCIF), 284–301 (LGGV…VFLG), 311–336 (MVKT…IMGG), and 344–363 (DILG…IMLL).

This sequence belongs to the cytochrome b family. As to quaternary structure, the main subunits of complex b-c1 are: cytochrome b, cytochrome c1 and the Rieske protein. Heme b serves as cofactor.

The protein localises to the mitochondrion inner membrane. In terms of biological role, component of the ubiquinol-cytochrome c reductase complex (complex III or cytochrome b-c1 complex) that is part of the mitochondrial respiratory chain. The b-c1 complex mediates electron transfer from ubiquinol to cytochrome c. Contributes to the generation of a proton gradient across the mitochondrial membrane that is then used for ATP synthesis. The sequence is that of Cytochrome b (mt:Cyt-b) from Leptorhynchoides thecatus (Thorny-headed worm).